The chain runs to 217 residues: Small ribosomal subunit protein uS2 (217 aa).

The protein belongs to the universal ribosomal protein uS2 family.

The protein is Small ribosomal subunit protein uS2 of Korarchaeum cryptofilum (strain OPF8).